The sequence spans 620 residues: Glutathione-regulated potassium-efflux system protein KefC (620 aa).

A run of 12 helical transmembrane segments spans residues 4-24 (HTLL…PIAV), 26-46 (LGLG…PWGL), 54-74 (SILH…GLEL), 90-110 (GALQ…FLGL), 114-134 (VAEL…MQAM), 149-169 (FAVL…IPLL), 178-198 (LGAF…VVLL), 218-238 (VFSA…EEVG), 270-290 (GLLL…GTLV), 294-314 (LRIL…LWLV), 327-347 (WFAV…GAAQ), and 359-379 (ALTL…VLLT). One can recognise an RCK N-terminal domain in the interval 399–518 (QPRVIVAGFG…AGVAMPERET (120 aa)). Residues 599–620 (QGTAEGKHSGEVADEPEVKPSI) form a disordered region.

Belongs to the monovalent cation:proton antiporter 2 (CPA2) transporter (TC 2.A.37) family. KefC subfamily. In terms of assembly, homodimer. Interacts with the regulatory subunit KefF.

The protein localises to the cell inner membrane. Pore-forming subunit of a potassium efflux system that confers protection against electrophiles. Catalyzes K(+)/H(+) antiport. The sequence is that of Glutathione-regulated potassium-efflux system protein KefC from Salmonella agona (strain SL483).